Reading from the N-terminus, the 484-residue chain is MITIDKILEILKNDHNFREILFHEHYYYNWTQNVTFNALSYDSRQISSDTLFFAKGATFKKEYLDSAITAGLSFYVSEIDYGADIPVILVNDIKKAMSLISMSFYNNPQNKLKLLAFTGTKGKTTAAYFAYHMLKVNHRPAMLSTMNTTLDGKSFFKSHLTTPESLDLFRMMATAVENQMTHLVMEVSSQAYLTKRVYGLTFDVGVFLNISPDHIGPIEHPTFEDYFFHKRLLMENSNAVVVNSQMDHFNIVKEQVEYIPHDFYGDYSENVITESQAFSFHVKGKLENTYDIKLIGKFNQENAIAAGLACLRLGVSIEDIKNGIAQTTVPGRMEVLTQTNGAKIFVDYAHNGDSLKKLLAVVEEHQKGDIILVLGAPGNKGQSRRKDFGDVINQHPNLQVILTADDPNFEDPLVISQEIASHINRPVTIIIDREEAIANASTLTNCKLDAIIIAGKGADAYQIIKGNHDNYSGDLEVAKKYLKR.

Ser43 contributes to the UDP-N-acetyl-alpha-D-muramoyl-L-alanyl-D-glutamate binding site. An ATP-binding site is contributed by 119-125 (GTKGKTT). Residues 161–162 (TT), Ser188, and Arg196 contribute to the UDP-N-acetyl-alpha-D-muramoyl-L-alanyl-D-glutamate site. The residue at position 230 (Lys230) is an N6-carboxylysine. The short motif at 405–408 (DDPN) is the L-lysine recognition motif element.

The protein belongs to the MurCDEF family. MurE subfamily. Carboxylation is probably crucial for Mg(2+) binding and, consequently, for the gamma-phosphate positioning of ATP.

The protein resides in the cytoplasm. The enzyme catalyses UDP-N-acetyl-alpha-D-muramoyl-L-alanyl-D-glutamate + L-lysine + ATP = UDP-N-acetyl-alpha-D-muramoyl-L-alanyl-gamma-D-glutamyl-L-lysine + ADP + phosphate + H(+). The protein operates within cell wall biogenesis; peptidoglycan biosynthesis. Its function is as follows. Catalyzes the addition of L-lysine to the nucleotide precursor UDP-N-acetylmuramoyl-L-alanyl-D-glutamate (UMAG) in the biosynthesis of bacterial cell-wall peptidoglycan. In Streptococcus agalactiae serotype Ia (strain ATCC 27591 / A909 / CDC SS700), this protein is UDP-N-acetylmuramoyl-L-alanyl-D-glutamate--L-lysine ligase.